Reading from the N-terminus, the 1185-residue chain is DNA-directed RNA polymerase subunit beta' (1185 aa).

Zn(2+) is bound by residues Cys60, Cys62, Cys75, and Cys78. Mg(2+)-binding residues include Asp449, Asp451, and Asp453. Cys774, Cys853, Cys860, and Cys863 together coordinate Zn(2+).

The protein belongs to the RNA polymerase beta' chain family. In terms of assembly, the RNAP catalytic core consists of 2 alpha, 1 beta, 1 beta' and 1 omega subunit. When a sigma factor is associated with the core the holoenzyme is formed, which can initiate transcription. Mg(2+) serves as cofactor. It depends on Zn(2+) as a cofactor.

The enzyme catalyses RNA(n) + a ribonucleoside 5'-triphosphate = RNA(n+1) + diphosphate. Its function is as follows. DNA-dependent RNA polymerase catalyzes the transcription of DNA into RNA using the four ribonucleoside triphosphates as substrates. This chain is DNA-directed RNA polymerase subunit beta', found in Desulforamulus reducens (strain ATCC BAA-1160 / DSM 100696 / MI-1) (Desulfotomaculum reducens).